The following is a 391-amino-acid chain: Aminoacetone oxidase (391 aa).

6 residues coordinate FAD: alanine 14, glutamate 33, isoleucine 134, glutamate 362, asparagine 374, and isoleucine 375.

It belongs to the BaiN/RdsA family. Monomer. Requires FAD as cofactor.

Flavoprotein that probably catalyzes the condensation of two molecules of aminoacetone to yield 3,6-dimethyl-2,5-dihydropyrazine, which is subsequently oxidized to 2,5-dimethylpyrazine. It could be involved in a microbial defense mechanism related to aminoacetone catabolism through a pathway yielding dimethylpyrazine derivatives instead of methylglyoxal. It has also low aminoacetone oxidase activity, and can produce hydrogen peroxide from aminoacetone. In addition, it shows very low L-amino acid oxidase activity, and can produce hydrogen peroxide from peptone and from seven amino acids, L-aspartate, L-tryptophan, L-lysine, L-isoleucine, L-arginine, L-asparagine and L-glutamine. It cannot use L-malate, oxaloacetate or alpha-aminobutyrate. Plays a role in antioxidant defense. This chain is Aminoacetone oxidase, found in Streptococcus cristatus.